The sequence spans 183 residues: Dual-action ribosomal maturation protein DarP (183 aa).

It belongs to the DarP family.

It is found in the cytoplasm. Functionally, member of a network of 50S ribosomal subunit biogenesis factors which assembles along the 30S-50S interface, preventing incorrect 23S rRNA structures from forming. Promotes peptidyl transferase center (PTC) maturation. This chain is Dual-action ribosomal maturation protein DarP, found in Escherichia coli O7:K1 (strain IAI39 / ExPEC).